Here is a 359-residue protein sequence, read N- to C-terminus: Phosphate acyltransferase (359 aa).

Positions Leu338 to Ala359 are disordered.

It belongs to the PlsX family. As to quaternary structure, homodimer. Probably interacts with PlsY.

The protein localises to the cytoplasm. The enzyme catalyses a fatty acyl-[ACP] + phosphate = an acyl phosphate + holo-[ACP]. It participates in lipid metabolism; phospholipid metabolism. Catalyzes the reversible formation of acyl-phosphate (acyl-PO(4)) from acyl-[acyl-carrier-protein] (acyl-ACP). This enzyme utilizes acyl-ACP as fatty acyl donor, but not acyl-CoA. This chain is Phosphate acyltransferase, found in Anaeromyxobacter sp. (strain Fw109-5).